The primary structure comprises 513 residues: Protein indeterminate-domain 11 (513 aa).

The segment at 1–84 (MMNKDMLLHQ…QPGNPDPESE (84 aa)) is disordered. Residues 10–45 (QHQQPQQDENMSNLTSASGDQASVSSGNITEASGSN) are compositionally biased toward polar residues. The segment covering 51–60 (QQQQEQQQQQ) has biased composition (low complexity). Ser89 carries the post-translational modification Phosphoserine. 2 C2H2-type zinc fingers span residues 99–121 (FVCEICNKGFQRDQNLQLHRRGH) and 141–171 (YVCPEASCVHHDPSRALGDLTGIKKHFCRKH). The short motif at 163–170 (IKKHFCRK) is the Nuclear localization signal element. A C2H2-type 2; degenerate zinc finger spans residues 176-199 (WKCDKCSKKYAVQSDCKAHSKTCG). Residues Cys178, Cys181, His194, Cys198, Cys205, Cys207, His220, and Cys224 each coordinate Zn(2+). A CCHC-type 2; atypical zinc finger spans residues 203 to 226 (YRCDCGTLFSRRDSFITHRAFCEA). Residues 213-225 (RRDSFITHRAFCE) are SHR-binding. Disordered stretches follow at residues 255 to 280 (ASHPHHHHQTQPTINVSSSSSSSHNH) and 334 to 358 (PQPHALTSSNPNPSNGGGGGGSLFS). Residues 264–280 (TQPTINVSSSSSSSHNH) are compositionally biased toward low complexity.

The protein localises to the nucleus. Functionally, probable transcription factor. This chain is Protein indeterminate-domain 11, found in Arabidopsis thaliana (Mouse-ear cress).